An 830-amino-acid polypeptide reads, in one-letter code: ABC transporter G family member STR (830 aa).

Residues 1-551 (MAKFKRTDTN…RTTLNVIRTP (551 aa)) lie on the Cytoplasmic side of the membrane. The region spanning 46-297 (LEFNNLSYSV…LAGFARPVPD (252 aa)) is the ABC transporter domain. 90 to 97 (GPSGAGKS) provides a ligand contact to ATP. 3 disordered regions span residues 333 to 356 (DQAA…PYAK), 368 to 422 (SHFS…SMQS), and 471 to 491 (SMSS…NKTP). Polar residues predominate over residues 368–378 (SHFSTGNMNSQ). A compositionally biased stretch (acidic residues) spans 395 to 405 (DYEDDDDEDEF). Positions 471–483 (SMSSSQFSMTQQT) are enriched in low complexity. Residues 552-572 (ELFLSREIVLTVMGLVLSSFF) form a helical membrane-spanning segment. Residues 573–588 (KKLSHFDFKTINHLLN) are Extracellular-facing. The chain crosses the membrane as a helical span at residues 589-609 (FYIFTICLVFFSSNDAVPTFI). Residues 610 to 630 (QERFIFIRETSHNAYRASSYV) lie on the Cytoplasmic side of the membrane. Residues 631 to 651 (ISSLIVYLPFFAIQGFTFAGI) form a helical membrane-spanning segment. Over 652 to 661 (TQYILHLNSS) the chain is Extracellular. A glycan (N-linked (GlcNAc...) asparagine) is linked at N659. Residues 662–682 (ILSFWLILYSSLVTSNAYVML) form a helical membrane-spanning segment. The Cytoplasmic segment spans residues 683-690 (VSALVPSY). A helical transmembrane segment spans residues 691-711 (ITGYAVVIATTALFFLTCGFF). Over 712–798 (LKRTQIPLVW…LFSMDIREEN (87 aa)) the chain is Extracellular. 2 N-linked (GlcNAc...) asparagine glycosylation sites follow: N771 and N780. Residues 799-819 (IWLDIVILLAWGVLYRLFFYV) form a helical membrane-spanning segment. Residues 820 to 830 (VLRFYSKNERK) lie on the Cytoplasmic side of the membrane.

This sequence belongs to the ABC transporter superfamily. ABCG family. Stunted arbuscule (STR) subfamily. As to quaternary structure, heterodimerizes with STR2; the resulting transporter is located in the peri-arbuscular membrane.

Its subcellular location is the cell membrane. In terms of biological role, together with STR2, required for arbuscule development in arbuscular mycorrhizal (AM) symbiosis. This chain is ABC transporter G family member STR, found in Petunia hybrida (Petunia).